Here is a 206-residue protein sequence, read N- to C-terminus: Small ribosomal subunit protein uS4 (206 aa).

The 63-residue stretch at 96-158 folds into the S4 RNA-binding domain; it reads SRLDNVVYRM…AKKQLRIQNA (63 aa).

The protein belongs to the universal ribosomal protein uS4 family. In terms of assembly, part of the 30S ribosomal subunit. Contacts protein S5. The interaction surface between S4 and S5 is involved in control of translational fidelity.

One of the primary rRNA binding proteins, it binds directly to 16S rRNA where it nucleates assembly of the body of the 30S subunit. Its function is as follows. With S5 and S12 plays an important role in translational accuracy. The polypeptide is Small ribosomal subunit protein uS4 (Francisella tularensis subsp. holarctica (strain OSU18)).